We begin with the raw amino-acid sequence, 66 residues long: MAKGKDVRIRVILECISCVRKGANEESTGISRYSTEKNRHNTPGQLEFKKFCRYCRKHTTHHEIKK.

This sequence belongs to the bacterial ribosomal protein bL33 family.

It is found in the plastid. Its subcellular location is the chloroplast. The protein is Large ribosomal subunit protein bL33c of Brachypodium distachyon (Purple false brome).